We begin with the raw amino-acid sequence, 308 residues long: Ribosomal RNA large subunit methyltransferase F (308 aa).

It belongs to the methyltransferase superfamily. METTL16/RlmF family.

The protein localises to the cytoplasm. The catalysed reaction is adenosine(1618) in 23S rRNA + S-adenosyl-L-methionine = N(6)-methyladenosine(1618) in 23S rRNA + S-adenosyl-L-homocysteine + H(+). Functionally, specifically methylates the adenine in position 1618 of 23S rRNA. The sequence is that of Ribosomal RNA large subunit methyltransferase F from Escherichia coli O6:H1 (strain CFT073 / ATCC 700928 / UPEC).